A 264-amino-acid chain; its full sequence is Thymidylate synthase (264 aa).

R21 contributes to the dUMP binding site. H51 contributes to the (6R)-5,10-methylene-5,6,7,8-tetrahydrofolate binding site. 126 to 127 lines the dUMP pocket; the sequence is RR. Residue C146 is the Nucleophile of the active site. DUMP is bound by residues 166-169, N177, and 207-209; these read RSAD and HIY. Residue D169 coordinates (6R)-5,10-methylene-5,6,7,8-tetrahydrofolate. Residue S263 coordinates (6R)-5,10-methylene-5,6,7,8-tetrahydrofolate.

It belongs to the thymidylate synthase family. Bacterial-type ThyA subfamily. As to quaternary structure, homodimer.

Its subcellular location is the cytoplasm. The catalysed reaction is dUMP + (6R)-5,10-methylene-5,6,7,8-tetrahydrofolate = 7,8-dihydrofolate + dTMP. Its pathway is pyrimidine metabolism; dTTP biosynthesis. Functionally, catalyzes the reductive methylation of 2'-deoxyuridine-5'-monophosphate (dUMP) to 2'-deoxythymidine-5'-monophosphate (dTMP) while utilizing 5,10-methylenetetrahydrofolate (mTHF) as the methyl donor and reductant in the reaction, yielding dihydrofolate (DHF) as a by-product. This enzymatic reaction provides an intracellular de novo source of dTMP, an essential precursor for DNA biosynthesis. The protein is Thymidylate synthase of Phocaeicola vulgatus (strain ATCC 8482 / DSM 1447 / JCM 5826 / CCUG 4940 / NBRC 14291 / NCTC 11154) (Bacteroides vulgatus).